The sequence spans 239 residues: Transcriptional regulatory protein DcuR (239 aa).

The Response regulatory domain maps to 3 to 121; that stretch reads NVLIIDDDAM…RFEEALTGWR (119 aa). D56 is modified (4-aspartylphosphate). The segment at residues 181–200 is a DNA-binding region (H-T-H motif); sequence TDELANEVNISRVSCRKYLI.

In terms of processing, phosphorylated and activated by DcuS.

It is found in the cytoplasm. In terms of biological role, member of the two-component regulatory system DcuR/DcuS. Involved in the C4-dicarboxylate-stimulated regulation of the genes encoding the anaerobic fumarate respiratory system (frdABCD; nuoAN; dcuB; dcuC; sdhCDAB; etc.). Weakly regulates the aerobic C4-dicarboxylate transporter dctA. The polypeptide is Transcriptional regulatory protein DcuR (dcuR) (Shigella flexneri).